The sequence spans 519 residues: Probable cytochrome P450 513D1 (519 aa).

A helical transmembrane segment spans residues 1–21 (MGISSIIIILFIIVLLKKLIK). C464 lines the heme pocket.

The protein belongs to the cytochrome P450 family. Heme is required as a cofactor.

The protein resides in the membrane. The chain is Probable cytochrome P450 513D1 (cyp513D1) from Dictyostelium discoideum (Social amoeba).